A 102-amino-acid chain; its full sequence is Large ribosomal subunit protein bL21 (102 aa).

It belongs to the bacterial ribosomal protein bL21 family. Part of the 50S ribosomal subunit. Contacts protein L20.

Functionally, this protein binds to 23S rRNA in the presence of protein L20. The chain is Large ribosomal subunit protein bL21 from Geobacillus sp. (strain WCH70).